Here is a 64-residue protein sequence, read N- to C-terminus: uncharacterized protein (64 aa).

This is an uncharacterized protein from Enterobacteria phage T4 (Bacteriophage T4).